Reading from the N-terminus, the 206-residue chain is RNA pyrophosphohydrolase (206 aa).

In terms of domain architecture, Nudix hydrolase spans 6–149 (GYRPNVGIVL…KRGVYARALR (144 aa)). The Nudix box signature appears at 38–59 (GGMNTDETPVEAMYRELQEETG). Residues 175–206 (MPGHTAGHDRPRKRPRSRGYWPKKAQGDVPPT) are disordered.

This sequence belongs to the Nudix hydrolase family. RppH subfamily. Requires a divalent metal cation as cofactor.

In terms of biological role, accelerates the degradation of transcripts by removing pyrophosphate from the 5'-end of triphosphorylated RNA, leading to a more labile monophosphorylated state that can stimulate subsequent ribonuclease cleavage. The chain is RNA pyrophosphohydrolase from Stenotrophomonas maltophilia (strain R551-3).